A 262-amino-acid polypeptide reads, in one-letter code: Putative hydro-lyase ROP_32680 (262 aa).

This sequence belongs to the D-glutamate cyclase family.

In Rhodococcus opacus (strain B4), this protein is Putative hydro-lyase ROP_32680.